A 274-amino-acid polypeptide reads, in one-letter code: 5'-3' exoribonuclease (274 aa).

9 residues coordinate Mn(2+): histidine 8, histidine 10, aspartate 15, histidine 40, glutamate 65, histidine 76, histidine 190, aspartate 247, and histidine 249.

The protein belongs to the PHP family. TrpH/YciV subfamily. Requires Mn(2+) as cofactor.

It catalyses the reaction a ribonucleoside 3',5'-bisphosphate + H2O = a ribonucleoside 5'-phosphate + phosphate. Efficiently catalyzes the hydrolysis of the 3'-phosphate from 3',5'-bis-phosphonucleotides as well as the successive hydrolysis of 5'-phosphomononucleotides from the 5'-end of short pieces of RNA and DNA, with no specificity toward the identity of the nucleotide base. Is more efficient at hydrolyzing RNA oligonucleotides than DNA oligonucleotides. This enzyme can also hydrolyze annealed DNA duplexes, albeit at a catalytic efficiency lower than that of the corresponding single-stranded oligonucleotides. The chain is 5'-3' exoribonuclease from Haemophilus influenzae (strain ATCC 51907 / DSM 11121 / KW20 / Rd).